A 206-amino-acid polypeptide reads, in one-letter code: Small ribosomal subunit protein uS4 (206 aa).

Residues 96-156 (SRLDNVVYRM…NKSKNQSRIK (61 aa)) form the S4 RNA-binding domain.

The protein belongs to the universal ribosomal protein uS4 family. As to quaternary structure, part of the 30S ribosomal subunit. Contacts protein S5. The interaction surface between S4 and S5 is involved in control of translational fidelity.

Its function is as follows. One of the primary rRNA binding proteins, it binds directly to 16S rRNA where it nucleates assembly of the body of the 30S subunit. Functionally, with S5 and S12 plays an important role in translational accuracy. This Buchnera aphidicola subsp. Acyrthosiphon pisum (strain 5A) protein is Small ribosomal subunit protein uS4.